A 4462-amino-acid polypeptide reads, in one-letter code: Dynein axonemal heavy chain 17 (4462 aa).

A stem region spans residues Met1–Gln1808. 2 TPR repeats span residues Thr1019–Cys1052 and Ile1702–Val1736. 4 AAA regions span residues Tyr1809–Val2030, Lys2090–Lys2311, Glu2417–Gly2665, and Ser2763–Tyr3012. Residues Gly1847–Thr1854, Gly2128–Ser2135, Gly2455–Ser2462, and Gly2801–Gln2808 contribute to the ATP site. Coiled-coil stretches lie at residues Tyr3027–Val3086 and Asp3257–Lys3309. Residues Tyr3027 to Glu3313 are stalk. AAA regions lie at residues Leu3405–Glu3632 and Ile3842–Asn4068. The TPR 3 repeat unit spans residues Pro4147 to Glu4182.

This sequence belongs to the dynein heavy chain family. As to quaternary structure, consists of at least two heavy chains and a number of intermediate and light chains. In terms of tissue distribution, expressed in testis. Expressed in spermatozoa (at protein level). Not detected in airway epithelial cells (at protein level).

It is found in the cytoplasm. The protein resides in the cytoskeleton. It localises to the flagellum axoneme. Its function is as follows. Force generating protein component of the outer dynein arms (ODAs) in the sperm flagellum. Produces force towards the minus ends of microtubules. Dynein has ATPase activity; the force-producing power stroke is thought to occur on release of ADP. Plays a major role in sperm motility, implicated in sperm flagellar assembly and beating. The chain is Dynein axonemal heavy chain 17 from Homo sapiens (Human).